The following is a 409-amino-acid chain: MTYPERPLLHLLTRTSLVGQIIVGLIAGLLLASFFPAAALKVGFIGKVFVSALKAVAPVLVFVLVMASIANHRQGQQTHIRPILLLYLVGTFSAAVVAVIASFAFPSSLVLASHPGEMSPPGGIAEVLQSLLLSVVDNPVNALISANFIGILAWAIGLGIAFRHASDTTRNLLSELSNGVSLIVKVVIRFAPLGIFGLVASTFAESGVEALKGYAHLLVVLLGCMLFVAFVVNPLIVFLKIRRNPYPLVLTCLRESGMTAFFTRSSAANIPVNLQLCERLGLHEDTYSVSIPLGATINMAGAAITITVLTLAAVHTLGIAVDVPTAILLSVVASVCACGASGVAGGSLLLIPLACSLFGIPSEVAMQVVAVGFIIAILQDSAETALNSSTDVLFTAAACLAEERKASAA.

The next 9 helical transmembrane spans lie at 17-37, 49-69, 83-103, 142-162, 180-200, 218-238, 301-321, 331-351, and 357-377; these read LVGQIIVGLIAGLLLASFFPA, FVSALKAVAPVLVFVLVMASI, ILLLYLVGTFSAAVVAVIASF, ALISANFIGILAWAIGLGIAF, VSLIVKVVIRFAPLGIFGLVA, LVVLLGCMLFVAFVVNPLIVF, GAAITITVLTLAAVHTLGIAV, VVASVCACGASGVAGGSLLLI, and LFGIPSEVAMQVVAVGFIIAI.

The protein belongs to the dicarboxylate/amino acid:cation symporter (DAACS) (TC 2.A.23) family.

It is found in the cell inner membrane. It catalyses the reaction L-serine(in) + Na(+)(in) = L-serine(out) + Na(+)(out). It carries out the reaction L-threonine(in) + Na(+)(in) = L-threonine(out) + Na(+)(out). Its function is as follows. Involved in the import of serine and threonine into the cell, with the concomitant import of sodium (symport system). This chain is Serine/threonine transporter SstT, found in Pseudomonas aeruginosa (strain UCBPP-PA14).